The chain runs to 230 residues: Phosphoglycolate phosphatase (230 aa).

Aspartate 9 acts as the Nucleophile in catalysis. Mg(2+) is bound by residues aspartate 9, aspartate 11, and aspartate 175.

It belongs to the HAD-like hydrolase superfamily. CbbY/CbbZ/Gph/YieH family. Requires Mg(2+) as cofactor.

It carries out the reaction 2-phosphoglycolate + H2O = glycolate + phosphate. Its pathway is organic acid metabolism; glycolate biosynthesis; glycolate from 2-phosphoglycolate: step 1/1. Specifically catalyzes the dephosphorylation of 2-phosphoglycolate. Is involved in the dissimilation of the intracellular 2-phosphoglycolate formed during the DNA repair of 3'-phosphoglycolate ends, a major class of DNA lesions induced by oxidative stress. This Psychrobacter arcticus (strain DSM 17307 / VKM B-2377 / 273-4) protein is Phosphoglycolate phosphatase.